Consider the following 96-residue polypeptide: Co-chaperonin GroES (96 aa).

Belongs to the GroES chaperonin family. As to quaternary structure, heptamer of 7 subunits arranged in a ring. Interacts with the chaperonin GroEL.

Its subcellular location is the cytoplasm. Together with the chaperonin GroEL, plays an essential role in assisting protein folding. The GroEL-GroES system forms a nano-cage that allows encapsulation of the non-native substrate proteins and provides a physical environment optimized to promote and accelerate protein folding. GroES binds to the apical surface of the GroEL ring, thereby capping the opening of the GroEL channel. This is Co-chaperonin GroES from Neisseria meningitidis serogroup A / serotype 4A (strain DSM 15465 / Z2491).